The chain runs to 162 residues: Ribonuclease P protein component (162 aa).

The disordered stretch occupies residues 1–67; sequence MDEKDLAAQP…GGKLVSLKGD (67 aa). The segment covering 21–31 has biased composition (basic and acidic residues); it reads GPHEDPRRQEG.

Belongs to the RnpA family. In terms of assembly, consists of a catalytic RNA component (M1 or rnpB) and a protein subunit.

The catalysed reaction is Endonucleolytic cleavage of RNA, removing 5'-extranucleotides from tRNA precursor.. RNaseP catalyzes the removal of the 5'-leader sequence from pre-tRNA to produce the mature 5'-terminus. It can also cleave other RNA substrates such as 4.5S RNA. The protein component plays an auxiliary but essential role in vivo by binding to the 5'-leader sequence and broadening the substrate specificity of the ribozyme. The chain is Ribonuclease P protein component from Thermus brockianus.